A 364-amino-acid polypeptide reads, in one-letter code: MRVLVSGGGTGGHIYPALALIREIKKLNPEARFLYIGTENGLESTIVPKAGIPFQSIVISGFKRKISLDNVKTVMRFLKGVQDSKRYIRRFNPDIVIGTGGYVCGPVVYAAAKLGIPTIVHEQNSVPGVTNKFLSRYVDKVAVCFEAAIEHFPESKVVMTGNPRASEVMEQNGMKGKRSVGLSLPKKSVLIFGGSRGARPINDAFVEAIEQFGNKSYEILYVTGEVHYDKVMEAVKQKGNPSNVIIKPFIHNMPEVLTGVDLVVSRAGATTLAELTALGKPSVLIPSPYVTNNHQEKNARSVVDKGAAKMLLEKDLTAETLIRDIDEILLDTQTLQNMKLAAKQLGIPDAANKLYEVMNKLVKK.

Residues 10 to 12 (TGG), Asn-124, Ser-195, Ile-250, and Gln-295 each bind UDP-N-acetyl-alpha-D-glucosamine.

It belongs to the glycosyltransferase 28 family. MurG subfamily.

Its subcellular location is the cell membrane. It carries out the reaction di-trans,octa-cis-undecaprenyl diphospho-N-acetyl-alpha-D-muramoyl-L-alanyl-D-glutamyl-meso-2,6-diaminopimeloyl-D-alanyl-D-alanine + UDP-N-acetyl-alpha-D-glucosamine = di-trans,octa-cis-undecaprenyl diphospho-[N-acetyl-alpha-D-glucosaminyl-(1-&gt;4)]-N-acetyl-alpha-D-muramoyl-L-alanyl-D-glutamyl-meso-2,6-diaminopimeloyl-D-alanyl-D-alanine + UDP + H(+). It participates in cell wall biogenesis; peptidoglycan biosynthesis. Its function is as follows. Cell wall formation. Catalyzes the transfer of a GlcNAc subunit on undecaprenyl-pyrophosphoryl-MurNAc-pentapeptide (lipid intermediate I) to form undecaprenyl-pyrophosphoryl-MurNAc-(pentapeptide)GlcNAc (lipid intermediate II). This is UDP-N-acetylglucosamine--N-acetylmuramyl-(pentapeptide) pyrophosphoryl-undecaprenol N-acetylglucosamine transferase 1 from Bacillus cereus (strain ATCC 14579 / DSM 31 / CCUG 7414 / JCM 2152 / NBRC 15305 / NCIMB 9373 / NCTC 2599 / NRRL B-3711).